The primary structure comprises 442 residues: Cyclin-A1-2 (442 aa).

2 stretches are compositionally biased toward polar residues: residues 1–12 (MSSSSRNLSQEN) and 39–63 (ITNQ…NKIG). A disordered region spans residues 1–72 (MSSSSRNLSQ…GQSKKAPKPA (72 aa)).

This sequence belongs to the cyclin family. Cyclin AB subfamily. In terms of assembly, interacts with CDC20-1, CDC20-2, FZR2/CCS52A1 and FZR1/CCS52A2. Expressed in roots, stems and flowers.

It is found in the cytoplasm. Its subcellular location is the nucleus. Involved in the regulation of male meiosis progression. This Arabidopsis thaliana (Mouse-ear cress) protein is Cyclin-A1-2 (CYCA1-2).